A 78-amino-acid chain; its full sequence is Acyl carrier protein (78 aa).

The 76-residue stretch at Asp2–Lys77 folds into the Carrier domain. Ser37 is subject to O-(pantetheine 4'-phosphoryl)serine.

This sequence belongs to the acyl carrier protein (ACP) family. Post-translationally, 4'-phosphopantetheine is transferred from CoA to a specific serine of apo-ACP by AcpS. This modification is essential for activity because fatty acids are bound in thioester linkage to the sulfhydryl of the prosthetic group.

The protein resides in the cytoplasm. The protein operates within lipid metabolism; fatty acid biosynthesis. Its function is as follows. Carrier of the growing fatty acid chain in fatty acid biosynthesis. This chain is Acyl carrier protein, found in Dechloromonas aromatica (strain RCB).